The following is a 348-amino-acid chain: Doublesex- and mab-3-related transcription factor dmd-10 (348 aa).

2 consecutive DNA-binding regions (DM) follow at residues 43–91 (CQRC…YNQF) and 119–166 (CQKC…KIRR). The interval 316–348 (SMSMSSSPSKDDESGDEDSDGLNSNSIIDVITV) is disordered.

It belongs to the DMRT family. In terms of tissue distribution, dimorphically expressed in the dimorphically connected interneuron AVG; expression is observed in the AVG in males, but not in hermaphrodites.

It is found in the nucleus. Functionally, transcription factor. Plays a role in neuronal signaling in polymodal sensory neuron ASH, downstream of sensory receptor activation. Required for maintenance of AVG synapses. The chain is Doublesex- and mab-3-related transcription factor dmd-10 from Caenorhabditis elegans.